The primary structure comprises 287 residues: Pantothenate synthetase (287 aa).

30–37 is an ATP binding site; that stretch reads MGNLHSGH. The Proton donor role is filled by H37. Q61 is a (R)-pantoate binding site. Q61 serves as a coordination point for beta-alanine. 149–152 lines the ATP pocket; that stretch reads GEKD. Q155 contributes to the (R)-pantoate binding site. Residues V178 and 186-189 contribute to the ATP site; that span reads LSSR.

It belongs to the pantothenate synthetase family. As to quaternary structure, homodimer.

It localises to the cytoplasm. It carries out the reaction (R)-pantoate + beta-alanine + ATP = (R)-pantothenate + AMP + diphosphate + H(+). It participates in cofactor biosynthesis; (R)-pantothenate biosynthesis; (R)-pantothenate from (R)-pantoate and beta-alanine: step 1/1. Functionally, catalyzes the condensation of pantoate with beta-alanine in an ATP-dependent reaction via a pantoyl-adenylate intermediate. The protein is Pantothenate synthetase of Pseudomonas putida (strain GB-1).